A 438-amino-acid polypeptide reads, in one-letter code: MSKPIVAMVGRPNVGKSTLFNKLAGKRISIVQDTPGVTRDRVYAESEWLNRKFTMIDTGGIEPESSDIIVKQMRRQAQIAIEMADVIVFVVDGKEGLTAADQEVAQMLRKSKKPVVLVVNKIDRLALEENSYEFYNLGIGDPITISASQGLGLGDMLDEVVKYFNDPSEDEEDDEYIRIAMIGKPNVGKSSLINRLLGEERVIVSNVPGTTRDSIDSYLETEDGKFILVDTAGLRRKSKVKEEIERYSVIRTYAAIEKADVAILVIDAEQGITEQDEKIIGYAHEMNKAIMVVVNKWDLIEKDDKTLSNYQKDLQQKLKFMPYAKYLFISALTGQRVHKILSTAKYCYDNYSKRVSTGLLNDVISKAVLMKEPPVVALKRLKIYYATQVATKPPKFVFFVNDPNLLHFSYGRYLENQLRESFDFDGTGIEIEYRARKE.

2 EngA-type G domains span residues 4 to 168 (PIVA…NDPS) and 177 to 352 (IRIA…DNYS). GTP-binding positions include 10–17 (GRPNVGKS), 57–61 (DTGGI), 120–123 (NKID), 183–190 (GKPNVGKS), 230–234 (DTAGL), and 295–298 (NKWD). The KH-like domain maps to 353–437 (KRVSTGLLND…GIEIEYRARK (85 aa)).

This sequence belongs to the TRAFAC class TrmE-Era-EngA-EngB-Septin-like GTPase superfamily. EngA (Der) GTPase family. In terms of assembly, associates with the 50S ribosomal subunit.

In terms of biological role, GTPase that plays an essential role in the late steps of ribosome biogenesis. This is GTPase Der from Clostridium perfringens (strain ATCC 13124 / DSM 756 / JCM 1290 / NCIMB 6125 / NCTC 8237 / Type A).